A 210-amino-acid chain; its full sequence is Na(+)-translocating NADH-quinone reductase subunit D (210 aa).

The next 6 helical transmembrane spans lie at 14–34, 42–62, 72–92, 103–123, 131–151, and 178–198; these read PIVS…ALAV, LVMT…ISML, IIVQ…VLQA, VFVG…AYAM, FMDG…VGFV, and NGLL…IWII.

This sequence belongs to the NqrDE/RnfAE family. Composed of six subunits; NqrA, NqrB, NqrC, NqrD, NqrE and NqrF.

Its subcellular location is the cell inner membrane. The enzyme catalyses a ubiquinone + n Na(+)(in) + NADH + H(+) = a ubiquinol + n Na(+)(out) + NAD(+). NQR complex catalyzes the reduction of ubiquinone-1 to ubiquinol by two successive reactions, coupled with the transport of Na(+) ions from the cytoplasm to the periplasm. NqrA to NqrE are probably involved in the second step, the conversion of ubisemiquinone to ubiquinol. In Shewanella woodyi (strain ATCC 51908 / MS32), this protein is Na(+)-translocating NADH-quinone reductase subunit D.